Reading from the N-terminus, the 259-residue chain is Tegument protein UL51 homolog (259 aa).

C9 carries the S-palmitoyl cysteine; by host lipid modification.

The protein belongs to the herpesviridae UL51 family. Oligomerizes. Interacts with ORF53; this interaction mediates ORF53 incorporation to virions. In terms of processing, phosphorylated. Palmitoylation is necessary for Golgi localization.

The protein localises to the virion tegument. The protein resides in the host cytoplasm. Its subcellular location is the host Golgi apparatus. In terms of biological role, plays several roles during the time course of infection, including egress of virus particles from the perinuclear space and secondary envelopment of cytoplasmic capsids that bud into specific trans-Golgi network (TGN)-derived membranes. This Varicella-zoster virus (strain Dumas) (HHV-3) protein is Tegument protein UL51 homolog.